Reading from the N-terminus, the 185-residue chain is HTH-type transcriptional regulator SAB2452 (185 aa).

In terms of domain architecture, HTH tetR-type spans 6-66 (IENRQRIEEI…YVIQRDLNTF (61 aa)). Residues 29–48 (SMNRIAKELGIGMGTLYRHF) constitute a DNA-binding region (H-T-H motif).

The protein is HTH-type transcriptional regulator SAB2452 of Staphylococcus aureus (strain bovine RF122 / ET3-1).